The following is a 316-amino-acid chain: Probable peptidyl-tRNA hydrolase 2 (316 aa).

Residues Met-1–Asn-127 form a disordered region. A compositionally biased stretch (polar residues) spans Pro-44–Asn-53. The span at Ile-75–Ser-89 shows a compositional bias: low complexity. Positions Glu-128–Arg-169 constitute a UBA domain. Residues Ser-170–Val-193 form a disordered region. Residues Ser-173–Met-190 show a composition bias toward acidic residues.

This sequence belongs to the PTH2 family.

It carries out the reaction an N-acyl-L-alpha-aminoacyl-tRNA + H2O = an N-acyl-L-amino acid + a tRNA + H(+). The natural substrate for this enzyme may be peptidyl-tRNAs which drop off the ribosome during protein synthesis. This Caenorhabditis elegans protein is Probable peptidyl-tRNA hydrolase 2.